The sequence spans 509 residues: DNA primase large subunit (509 aa).

The interval 253 to 270 (LSHSYTGQDYSTQGNVGK) is interdomain linker. Residues 266–509 (GNVGKISLDQ…GLEDYFSEDS (244 aa)) form an interacts with PRIM1 region. Positions 287, 367, 384, and 424 each coordinate [4Fe-4S] cluster. An RNA:DNA duplex-binding region spans residues 300-442 (HLRHGGRMQY…NVDDCGFSLN (143 aa)). The segment at 461-486 (IKKEPIQPETPQPKPSVQKTKDASSA) is disordered. Thr-470 is subject to Phosphothreonine.

It belongs to the eukaryotic-type primase large subunit family. In terms of assembly, heterodimer of a catalytic subunit PRIM1 and a regulatory subunit PRIM2, also known as the DNA primase complex. Interacts via (C-terminus) with PRIM1. Component of the alpha DNA polymerase complex (also known as the alpha DNA polymerase-primase complex) consisting of four subunits: the catalytic subunit POLA1, the regulatory subunit POLA2, and the primase complex subunits PRIM1 and PRIM2 respectively. Within the complex, POLA1 directly interacts with PRIM2. It depends on [4Fe-4S] cluster as a cofactor.

Regulatory subunit of the DNA primase complex and component of the DNA polymerase alpha complex (also known as the alpha DNA polymerase-primase complex) which play an essential role in the initiation of DNA synthesis. During the S phase of the cell cycle, the DNA polymerase alpha complex (composed of a catalytic subunit POLA1, an accessory subunit POLA2 and two primase subunits, the catalytic subunit PRIM1 and the regulatory subunit PRIM2) is recruited to DNA at the replicative forks via direct interactions with MCM10 and WDHD1. The primase subunit of the polymerase alpha complex initiates DNA synthesis by oligomerising short RNA primers on both leading and lagging strands. These primers are initially extended by the polymerase alpha catalytic subunit and subsequently transferred to polymerase delta and polymerase epsilon for processive synthesis on the lagging and leading strand, respectively. In the primase complex, both subunits are necessary for the initial di-nucleotide formation, but the extension of the primer depends only on the catalytic subunit. Binds RNA:DNA duplex and coordinates the catalytic activities of PRIM1 and POLA2 during primase-to-polymerase switch. In Homo sapiens (Human), this protein is DNA primase large subunit (PRIM2).